A 337-amino-acid polypeptide reads, in one-letter code: Large ribosomal subunit protein uL10 (337 aa).

Residues 309-337 (EEVVEEQEEVKEEEEEESDMASGLGALFG) are disordered. A compositionally biased stretch (acidic residues) spans 310–327 (EVVEEQEEVKEEEEEESD).

It belongs to the universal ribosomal protein uL10 family. In terms of assembly, part of the 50S ribosomal subunit. Forms part of the ribosomal stalk which helps the ribosome interact with GTP-bound translation factors. Forms a heptameric L10(L12)2(L12)2(L12)2 complex, where L10 forms an elongated spine to which the L12 dimers bind in a sequential fashion.

Its function is as follows. Forms part of the ribosomal stalk, playing a central role in the interaction of the ribosome with GTP-bound translation factors. The sequence is that of Large ribosomal subunit protein uL10 from Methanococcoides burtonii (strain DSM 6242 / NBRC 107633 / OCM 468 / ACE-M).